The sequence spans 390 residues: Succinate--CoA ligase [ADP-forming] subunit beta (390 aa).

The region spanning Lys-9–Met-245 is the ATP-grasp domain. Residues Lys-46, Gly-53–Gly-55, Glu-99, Ser-102, and Glu-107 contribute to the ATP site. Asn-200 and Asp-214 together coordinate Mg(2+). Substrate-binding positions include Asn-265 and Gly-322 to Val-324.

It belongs to the succinate/malate CoA ligase beta subunit family. As to quaternary structure, heterotetramer of two alpha and two beta subunits. Mg(2+) is required as a cofactor.

The catalysed reaction is succinate + ATP + CoA = succinyl-CoA + ADP + phosphate. The enzyme catalyses GTP + succinate + CoA = succinyl-CoA + GDP + phosphate. It participates in carbohydrate metabolism; tricarboxylic acid cycle; succinate from succinyl-CoA (ligase route): step 1/1. Its function is as follows. Succinyl-CoA synthetase functions in the citric acid cycle (TCA), coupling the hydrolysis of succinyl-CoA to the synthesis of either ATP or GTP and thus represents the only step of substrate-level phosphorylation in the TCA. The beta subunit provides nucleotide specificity of the enzyme and binds the substrate succinate, while the binding sites for coenzyme A and phosphate are found in the alpha subunit. This chain is Succinate--CoA ligase [ADP-forming] subunit beta, found in Coxiella burnetii (strain RSA 331 / Henzerling II).